A 620-amino-acid polypeptide reads, in one-letter code: Probable indole-3-acetic acid-amido synthetase GH3.7 (620 aa).

Belongs to the IAA-amido conjugating enzyme family. As to expression, ubiquitous.

In terms of biological role, may catalyze the synthesis of indole-3-acetic acid (IAA)-amino acid conjugates, providing a mechanism for the plant to cope with the presence of excess auxin. The polypeptide is Probable indole-3-acetic acid-amido synthetase GH3.7 (GH3.7) (Oryza sativa subsp. japonica (Rice)).